The primary structure comprises 200 residues: Holliday junction resolvase RecU (200 aa).

4 residues coordinate Mg(2+): threonine 82, aspartate 84, glutamate 97, and glutamine 116.

Belongs to the RecU family. Mg(2+) serves as cofactor.

The protein resides in the cytoplasm. It carries out the reaction Endonucleolytic cleavage at a junction such as a reciprocal single-stranded crossover between two homologous DNA duplexes (Holliday junction).. Functionally, endonuclease that resolves Holliday junction intermediates in genetic recombination. Cleaves mobile four-strand junctions by introducing symmetrical nicks in paired strands. Promotes annealing of linear ssDNA with homologous dsDNA. Required for DNA repair, homologous recombination and chromosome segregation. The polypeptide is Holliday junction resolvase RecU (Streptococcus gordonii (strain Challis / ATCC 35105 / BCRC 15272 / CH1 / DL1 / V288)).